Reading from the N-terminus, the 99-residue chain is Large ribosomal subunit protein uL23 (99 aa).

This sequence belongs to the universal ribosomal protein uL23 family. In terms of assembly, part of the 50S ribosomal subunit. Contacts protein L29, and trigger factor when it is bound to the ribosome.

Its function is as follows. One of the early assembly proteins it binds 23S rRNA. One of the proteins that surrounds the polypeptide exit tunnel on the outside of the ribosome. Forms the main docking site for trigger factor binding to the ribosome. The chain is Large ribosomal subunit protein uL23 from Saccharopolyspora erythraea (strain ATCC 11635 / DSM 40517 / JCM 4748 / NBRC 13426 / NCIMB 8594 / NRRL 2338).